Reading from the N-terminus, the 571-residue chain is Potassium-transporting ATPase potassium-binding subunit (571 aa).

Transmembrane regions (helical) follow at residues 5-25 (GWMQ…PLGG), 64-84 (LAYA…LYAL), 136-156 (GLTH…VALI), 179-199 (LYVL…QGMP), 220-240 (VGPV…GGFF), 254-274 (LSNF…TNVF), 285-305 (WAIL…TYWA), 330-350 (FGIA…CGAV), 375-395 (IIGG…VAIF), 421-441 (MLGI…ATVV), 488-508 (LAIG…AIAG), and 527-547 (GGLF…LTFF).

This sequence belongs to the KdpA family. As to quaternary structure, the system is composed of three essential subunits: KdpA, KdpB and KdpC.

Its subcellular location is the cell inner membrane. Its function is as follows. Part of the high-affinity ATP-driven potassium transport (or Kdp) system, which catalyzes the hydrolysis of ATP coupled with the electrogenic transport of potassium into the cytoplasm. This subunit binds the periplasmic potassium ions and delivers the ions to the membrane domain of KdpB through an intramembrane tunnel. The protein is Potassium-transporting ATPase potassium-binding subunit of Methylorubrum extorquens (strain CM4 / NCIMB 13688) (Methylobacterium extorquens).